We begin with the raw amino-acid sequence, 428 residues long: D-amino acid dehydrogenase (428 aa).

FAD is bound at residue 3–17 (VVILGSGVVGVASAY).

It belongs to the DadA oxidoreductase family. FAD serves as cofactor.

It carries out the reaction a D-alpha-amino acid + A + H2O = a 2-oxocarboxylate + AH2 + NH4(+). Its pathway is amino-acid degradation; D-alanine degradation; NH(3) and pyruvate from D-alanine: step 1/1. Functionally, oxidative deamination of D-amino acids. The chain is D-amino acid dehydrogenase from Burkholderia multivorans (strain ATCC 17616 / 249).